The chain runs to 480 residues: Outer capsid protein VP5 (480 aa).

Residues 1–48 form an involved in membrane permeabilization region; sequence MTSKRLGARFPGFLNRIGSGITRAARSDTTKRIPSAAGRAVERVAASE.

Belongs to the orbivirus VP5 family.

Its subcellular location is the virion. VP5 protein is one of the two proteins (with VP2) which constitute the virus particle outer capsid. Acts as a membrane permeabilization protein that mediates release of viral particles from endosomal compartments into the cytoplasm. Permeabilization activity is probably negatively regulated by VP2 and is triggered by endosomal degradation of VP2 and exposure to low pH. This chain is Outer capsid protein VP5 (Segment-6), found in Ixodes (gulls).